The chain runs to 93 residues: MARAITLVESTRPQHRALAQELLTELLPHSGRARRVGISGVPGVGKSTFIDALGVMLTSLGHRVAVLAVDPSSTRTGGSILGDKTRMERLSLD.

The protein belongs to the SIMIBI class G3E GTPase family. ArgK/MeaB subfamily.

This is an uncharacterized protein from Streptomyces virginiae (Streptomyces cinnamonensis).